Reading from the N-terminus, the 236-residue chain is Ribose-5-phosphate isomerase A (236 aa).

Residues 31 to 34 (TGST), 84 to 87 (DGAD), and 97 to 100 (KGGG) contribute to the substrate site. Catalysis depends on glutamate 106, which acts as the Proton acceptor. Substrate is bound at residue lysine 124.

This sequence belongs to the ribose 5-phosphate isomerase family. Homodimer.

It catalyses the reaction aldehydo-D-ribose 5-phosphate = D-ribulose 5-phosphate. It functions in the pathway carbohydrate degradation; pentose phosphate pathway; D-ribose 5-phosphate from D-ribulose 5-phosphate (non-oxidative stage): step 1/1. Its function is as follows. Catalyzes the reversible conversion of ribose-5-phosphate to ribulose 5-phosphate. The sequence is that of Ribose-5-phosphate isomerase A from Polynucleobacter necessarius subsp. necessarius (strain STIR1).